The chain runs to 230 residues: Cyclin-U2-2 (230 aa).

The protein belongs to the cyclin family. Cyclin U/P subfamily. As to quaternary structure, interacts with CDKA-1. As to expression, expressed in roots and stems. Expressed in the shoot apex, leaf primordia and young leaves.

This is Cyclin-U2-2 (CYCU2-2) from Arabidopsis thaliana (Mouse-ear cress).